The sequence spans 547 residues: Chaperonin GroEL (547 aa).

Residues 30–33 (TLGP), Lys51, 87–91 (DGTTT), Gly415, and Asp496 each bind ATP. The disordered stretch occupies residues 528 to 547 (KEGAGAGGGMPDMGGMGGMM). Residues 531-547 (AGAGGGMPDMGGMGGMM) are compositionally biased toward gly residues.

Belongs to the chaperonin (HSP60) family. As to quaternary structure, forms a cylinder of 14 subunits composed of two heptameric rings stacked back-to-back. Interacts with the co-chaperonin GroES.

The protein resides in the cytoplasm. The catalysed reaction is ATP + H2O + a folded polypeptide = ADP + phosphate + an unfolded polypeptide.. Its function is as follows. Together with its co-chaperonin GroES, plays an essential role in assisting protein folding. The GroEL-GroES system forms a nano-cage that allows encapsulation of the non-native substrate proteins and provides a physical environment optimized to promote and accelerate protein folding. The protein is Chaperonin GroEL of Dinoroseobacter shibae (strain DSM 16493 / NCIMB 14021 / DFL 12).